Consider the following 416-residue polypeptide: RNA polymerase sigma-C factor (416 aa).

The Polymerase core binding signature appears at 205–218 (DLVQEGTLGLERAV). Residues 374–393 (LAEIGRALDLSRERVRQIES) constitute a DNA-binding region (H-T-H motif).

The protein belongs to the sigma-70 factor family.

Sigma factors are initiation factors that promote the attachment of RNA polymerase to specific initiation sites and are then released. The chain is RNA polymerase sigma-C factor (sigC) from Nostoc sp. (strain PCC 7120 / SAG 25.82 / UTEX 2576).